The following is a 247-amino-acid chain: MLLIINNIINNDVPTPWGVYFQDSATPNHEGIIELHDNIMFYLVLILCLVSWLLFSIVKDGSKNPLPHKYLVHGQTIEIIWTILPALVLLVIAFPSFILLYLCDEVISPAMTIKAIGLQWYWKYEYSDFINDSGETIEFESYVIPEDLLEDGQLPLLDTDTSIVCPVNTHIRFIVSAADVIHDFAVPSLGIKIDACPGRLNQVSALIQREGVYYGQCSELCGVAHSAMPIKVEAVSLKEFLTWLNEQ.

Residues 1-11 form the signal peptide; the sequence is MLLIINNIINN. Residues 12 to 38 are Mitochondrial intermembrane-facing; that stretch reads DVPTPWGVYFQDSATPNHEGIIELHDN. A helical transmembrane segment spans residues 39-59; it reads IMFYLVLILCLVSWLLFSIVK. The Mitochondrial matrix portion of the chain corresponds to 60–78; it reads DGSKNPLPHKYLVHGQTIE. The helical transmembrane segment at 79 to 101 threads the bilayer; sequence IIWTILPALVLLVIAFPSFILLY. Over 102–247 the chain is Mitochondrial intermembrane; sequence LCDEVISPAM…KEFLTWLNEQ (146 aa). Cu cation is bound by residues His182, Cys217, Glu219, Cys221, His225, and Met228. A Mg(2+)-binding site is contributed by Glu219.

It belongs to the cytochrome c oxidase subunit 2 family. As to quaternary structure, component of the cytochrome c oxidase (complex IV, CIV), a multisubunit enzyme composed of a catalytic core of 3 subunits and several supernumerary subunits. The complex exists as a monomer or a dimer and forms supercomplexes (SCs) in the inner mitochondrial membrane with ubiquinol-cytochrome c oxidoreductase (cytochrome b-c1 complex, complex III, CIII). Requires Cu cation as cofactor. Post-translationally, the signal sequence of COX2 is processed by IMP1.

It localises to the mitochondrion inner membrane. The catalysed reaction is 4 Fe(II)-[cytochrome c] + O2 + 8 H(+)(in) = 4 Fe(III)-[cytochrome c] + 2 H2O + 4 H(+)(out). In terms of biological role, component of the cytochrome c oxidase, the last enzyme in the mitochondrial electron transport chain which drives oxidative phosphorylation. The respiratory chain contains 3 multisubunit complexes succinate dehydrogenase (complex II, CII), ubiquinol-cytochrome c oxidoreductase (cytochrome b-c1 complex, complex III, CIII) and cytochrome c oxidase (complex IV, CIV), that cooperate to transfer electrons derived from NADH and succinate to molecular oxygen, creating an electrochemical gradient over the inner membrane that drives transmembrane transport and the ATP synthase. Cytochrome c oxidase is the component of the respiratory chain that catalyzes the reduction of oxygen to water. Electrons originating from reduced cytochrome c in the intermembrane space (IMS) are transferred via the dinuclear copper A center (CU(A)) of subunit 2 and heme A of subunit 1 to the active site in subunit 1, a binuclear center (BNC) formed by heme A3 and copper B (CU(B)). The BNC reduces molecular oxygen to 2 water molecules using 4 electrons from cytochrome c in the IMS and 4 protons from the mitochondrial matrix. The polypeptide is Cytochrome c oxidase subunit 2 (COX2) (Wickerhamomyces canadensis (Yeast)).